The chain runs to 75 residues: MNFATKIVILLLVAALILAVTSEKGDSSSDDNEAKETEGELPLSDFYGSCVRPKKCKPHLKCNAAQICVFPKTGR.

Positions 1-19 are cleaved as a signal peptide; that stretch reads MNFATKIVILLLVAALILA. 2 cysteine pairs are disulfide-bonded: Cys50-Cys62 and Cys56-Cys68.

As to expression, expressed by the venom gland.

It localises to the secreted. Its function is as follows. Insecticidal toxin. In Opisthacanthus cayaporum (South American scorpion), this protein is Insecticidal toxin OcyC10.